We begin with the raw amino-acid sequence, 381 residues long: 1-deoxy-D-xylulose 5-phosphate reductoisomerase (381 aa).

Positions 10, 11, 12, 13, 38, and 121 each coordinate NADPH. K122 is a 1-deoxy-D-xylulose 5-phosphate binding site. Residue E123 coordinates NADPH. Mn(2+) is bound at residue D147. The 1-deoxy-D-xylulose 5-phosphate site is built by S148, E149, S173, and H196. E149 contacts Mn(2+). Residue G202 coordinates NADPH. Residues S209, N214, K215, and E218 each contribute to the 1-deoxy-D-xylulose 5-phosphate site. E218 contributes to the Mn(2+) binding site.

This sequence belongs to the DXR family. The cofactor is Mg(2+). Mn(2+) serves as cofactor.

The enzyme catalyses 2-C-methyl-D-erythritol 4-phosphate + NADP(+) = 1-deoxy-D-xylulose 5-phosphate + NADPH + H(+). It functions in the pathway isoprenoid biosynthesis; isopentenyl diphosphate biosynthesis via DXP pathway; isopentenyl diphosphate from 1-deoxy-D-xylulose 5-phosphate: step 1/6. Functionally, catalyzes the NADPH-dependent rearrangement and reduction of 1-deoxy-D-xylulose-5-phosphate (DXP) to 2-C-methyl-D-erythritol 4-phosphate (MEP). The sequence is that of 1-deoxy-D-xylulose 5-phosphate reductoisomerase from Alkaliphilus oremlandii (strain OhILAs) (Clostridium oremlandii (strain OhILAs)).